Here is a 520-residue protein sequence, read N- to C-terminus: FNIP repeat-containing protein DDB_G0274063/DDB_G0272642 (520 aa).

2 disordered regions span residues 47 to 86 (QQQSNNNNNNNNNNNNNNNNNNFINFSNHTNNINNNIDNR) and 100 to 121 (NISSSSPYTLTSTPSSSSSSSS). Positions 51-84 (NNNNNNNNNNNNNNNNNNFINFSNHTNNINNNID) are enriched in low complexity. FNIP repeat units lie at residues 242 to 285 (YNNN…FGES), 286 to 331 (FNQD…FGLS), 332 to 406 (YNQP…FGVQ), and 453 to 496 (FNQQ…FHNS).

The polypeptide is FNIP repeat-containing protein DDB_G0274063/DDB_G0272642 (Dictyostelium discoideum (Social amoeba)).